A 356-amino-acid chain; its full sequence is Heat-inducible transcription repressor HrcA (356 aa).

Belongs to the HrcA family.

Functionally, negative regulator of class I heat shock genes (grpE-dnaK-dnaJ and groELS operons). Prevents heat-shock induction of these operons. This is Heat-inducible transcription repressor HrcA from Chelativorans sp. (strain BNC1).